Consider the following 968-residue polypeptide: RNA polymerase-associated protein RapA (968 aa).

One can recognise a Helicase ATP-binding domain in the interval 164-334 (DVGRRHAPRV…FARLRLLDPN (171 aa)). 177 to 184 (DEVGLGKT) contributes to the ATP binding site. Residues 280–283 (DEAH) carry the DEAH box motif. Residues 490-685 (RVEWLMGYLT…ALKAQLEQGR (196 aa)) enclose the Helicase C-terminal domain.

It belongs to the SNF2/RAD54 helicase family. RapA subfamily. Interacts with the RNAP. Has a higher affinity for the core RNAP than for the holoenzyme. Its ATPase activity is stimulated by binding to RNAP.

In terms of biological role, transcription regulator that activates transcription by stimulating RNA polymerase (RNAP) recycling in case of stress conditions such as supercoiled DNA or high salt concentrations. Probably acts by releasing the RNAP, when it is trapped or immobilized on tightly supercoiled DNA. Does not activate transcription on linear DNA. Probably not involved in DNA repair. The polypeptide is RNA polymerase-associated protein RapA (Salmonella paratyphi A (strain ATCC 9150 / SARB42)).